Here is a 752-residue protein sequence, read N- to C-terminus: Protein GCN20 (752 aa).

The residue at position 2 (A2) is an N-acetylalanine. 2 consecutive ABC transporter domains span residues 199–464 (IHID…RKNA) and 532–748 (IQLQ…AAGV). ATP is bound by residues 232 to 239 (GQNGIGKS) and 565 to 572 (GANGCGKT).

It belongs to the ABC transporter superfamily. ABCF family. EF3 subfamily. Interacts (via N-terminus) with GCN1 (via C-terminus); this interaction stimulates GCN2 kinase activity in response to amino acid starvation. The GCN1-GCN20 complex interacts with GCN2 on translating ribosomes in amino acid-starved cells; this association stimulates GCN2 kinase activation by uncharged tRNAs, and hence allowing GCN4 translational activation and derepression of amino acid biosynthetic genes. Associates with ribosomes.

In terms of biological role, acts as a positive activator of the GCN2 protein kinase activity in response to in response to low amino acid, carbon, or purine availability. Component of the GCN1-GCN20 complex that forms a complex with GCN2 on translating ribosomes; during this process, GCN20 helps GCN1 to act as a chaperone to facilitate delivery of uncharged tRNAs that enter the A site of ribosomes to the tRNA-binding domain of GCN2, and hence stimulating GCN2 kinase activity. Participates in gene-specific mRNA translation activation, such as the transcriptional activator GCN4, by promoting the GCN2-mediated phosphorylation of eukaryotic translation initiation factor 2 (eIF-2-alpha/SUI2) on 'Ser-52', and hence allowing GCN4-mediated reprogramming of amino acid biosynthetic gene expression to alleviate nutrient depletion. This is Protein GCN20 from Saccharomyces cerevisiae (strain ATCC 204508 / S288c) (Baker's yeast).